The sequence spans 606 residues: Limonene synthase, chloroplastic (606 aa).

Residues 1-38 (MAIINLPVPTNSSSEVNKHNHLRSCLPSGRATFTTLSA) constitute a chloroplast transit peptide. 5 residues coordinate (2E)-geranyl diphosphate: R320, D357, D361, R497, and D500. Mg(2+)-binding residues include D357 and D361. Positions 357–361 (DDIYD) match the DDXXD motif motif. Residues D500, T504, and E508 each contribute to the Mg(2+) site.

The protein belongs to the terpene synthase family. Tpsb subfamily. In terms of assembly, monomer. Mg(2+) is required as a cofactor. Requires Mn(2+) as cofactor. Confined to fruits.

It localises to the plastid. Its subcellular location is the chloroplast. It catalyses the reaction (2E,6E)-farnesyl diphosphate = (E)-beta-farnesene + diphosphate. It carries out the reaction (2E)-geranyl diphosphate = limonene + diphosphate. The enzyme catalyses (2E)-geranyl diphosphate = beta-pinene + diphosphate. The catalysed reaction is (2E)-geranyl diphosphate = sabinene + diphosphate. It catalyses the reaction (2E)-geranyl diphosphate = beta-myrcene + diphosphate. It carries out the reaction (2E)-geranyl diphosphate = alpha-pinene + diphosphate. The enzyme catalyses (2E)-geranyl diphosphate = terpinolene + diphosphate. The protein operates within secondary metabolite biosynthesis; terpenoid biosynthesis. Functionally, monoterpene synthase (mono-TPS) involved in the biosynthesis of monoterpenes natural products, constituent of coffee beverage aroma. Catalyzes the conversion of (2E)-geranyl diphosphate (GPP) into limonene, beta-pinene, sabinene and beta-myrcene, and, as minor products, alpha-pinene and alpha-terpinolene. Can also, with a low efficiency, use farnesyl pyrophosphate (FPP) as substrate to produce beta-farnesene. Not able to use geranylgeranyl pyrophosphate (GGPP) as substrate. The sequence is that of Limonene synthase, chloroplastic from Coffea arabica (Arabian coffee).